A 515-amino-acid chain; its full sequence is Heavy metal-associated isoprenylated plant protein 41 (515 aa).

Positions 376–444 (KQRIVLKMDM…KVCMTTIITV (69 aa)) constitute an HMA domain. C512 carries the cysteine methyl ester modification. C512 is lipidated: S-farnesyl cysteine. The propeptide at 513 to 515 (RIL) is removed in mature form.

The protein belongs to the HIPP family.

In terms of biological role, heavy-metal-binding protein. In Arabidopsis thaliana (Mouse-ear cress), this protein is Heavy metal-associated isoprenylated plant protein 41.